The following is a 196-amino-acid chain: Molybdenum cofactor guanylyltransferase (196 aa).

Residues 10 to 12 (LAG), Lys-23, Asn-51, Asp-69, and Asp-99 each bind GTP. Asp-99 contacts Mg(2+).

This sequence belongs to the MobA family. In terms of assembly, monomer. The cofactor is Mg(2+).

The protein localises to the cytoplasm. It catalyses the reaction Mo-molybdopterin + GTP + H(+) = Mo-molybdopterin guanine dinucleotide + diphosphate. Transfers a GMP moiety from GTP to Mo-molybdopterin (Mo-MPT) cofactor (Moco or molybdenum cofactor) to form Mo-molybdopterin guanine dinucleotide (Mo-MGD) cofactor. The sequence is that of Molybdenum cofactor guanylyltransferase from Shewanella frigidimarina (strain NCIMB 400).